The sequence spans 298 residues: Protein Bel-1 (298 aa).

The segment covering 1-17 has biased composition (basic and acidic residues); the sequence is MASWEKEKELAHLHQPE. Residues 1–46 form a disordered region; that stretch reads MASWEKEKELAHLHQPEDDPLPDLSLLLDMDQFEPTEGPDSNPGAE. A DNA-binding region spans residues 91-200; the sequence is SKWACARLIL…GEPLKPRVRA (110 aa). The Nuclear localization signal signature appears at 214-223; sequence ADRPKRSRWG. The tract at residues 225–298 is transactivation domain; sequence APREQPNTSS…SGPPTGPSEN (74 aa).

Homodimer or homomultimer. Forms complexes with the host nuclear factors NFIA, NFIB, NFIC or NFIX.

It localises to the host nucleus. In terms of biological role, transcriptional transactivator that activates the viral internal promoter (IP), thereby enhancing its own expression. This transactivation is repressed by nuclear factor I. Also transactivates the long terminal repeat (LTR) promoter, thereby inducing structural gene expression, initiating the late phase of infection. It is therefore a key regulator of viral gene expression. It directly binds to and activates DNA target sites of viral promoters and those of distinct cellular genes. Required for viral replication. This chain is Protein Bel-1 (bel1), found in Chlorocebus aethiops (Green monkey).